A 183-amino-acid polypeptide reads, in one-letter code: Large ribosomal subunit protein uL5 (183 aa).

This sequence belongs to the universal ribosomal protein uL5 family. Part of the 50S ribosomal subunit; part of the 5S rRNA/L5/L18/L25 subcomplex. Contacts the 5S rRNA and the P site tRNA. Forms a bridge to the 30S subunit in the 70S ribosome.

Its function is as follows. This is one of the proteins that bind and probably mediate the attachment of the 5S RNA into the large ribosomal subunit, where it forms part of the central protuberance. In the 70S ribosome it contacts protein S13 of the 30S subunit (bridge B1b), connecting the 2 subunits; this bridge is implicated in subunit movement. Contacts the P site tRNA; the 5S rRNA and some of its associated proteins might help stabilize positioning of ribosome-bound tRNAs. This is Large ribosomal subunit protein uL5 from Tropheryma whipplei (strain TW08/27) (Whipple's bacillus).